Reading from the N-terminus, the 395-residue chain is Protein PELOTA 2 (395 aa).

The protein belongs to the eukaryotic release factor 1 family. Pelota subfamily. A divalent metal cation is required as a cofactor.

It localises to the cytoplasm. Its subcellular location is the nucleus. Its function is as follows. Component of the Pelota-HBS1L complex, a complex that recognizes stalled ribosomes and triggers the No-Go Decay (NGD) pathway. In the Pelota-HBS1L complex, pelo recognizes ribosomes stalled at the 3' end of an mRNA and engages stalled ribosomes by destabilizing mRNA in the mRNA channel. Following ribosome-binding, the Pelota-HBS1L complex promotes the disassembly of stalled ribosomes, followed by degradation of damaged mRNAs as part of the NGD pathway. This chain is Protein PELOTA 2 (PEL2), found in Arabidopsis thaliana (Mouse-ear cress).